The sequence spans 54 residues: Ovomucoid (54 aa).

The region spanning 4–54 (VDCSDYPKPVCSLEYMPLCGSDSKTYSNKCDFCNAFVDSNGTLSLSHFGKC) is the Kazal-like domain. Cystine bridges form between Cys6-Cys36, Cys14-Cys33, and Cys22-Cys54. N-linked (GlcNAc...) asparagine glycosylation occurs at Asn43.

The protein resides in the secreted. The protein is Ovomucoid of Circus aeruginosus (Western marsh harrier).